Reading from the N-terminus, the 217-residue chain is Growth hormone variant (217 aa).

The first 26 residues, 1-26 (MAAGSRTSLLLAFGLLCLSWLQEGSA), serve as a signal peptide directing secretion. 2 disulfide bridges follow: cysteine 79–cysteine 191 and cysteine 208–cysteine 215. Serine 132 is subject to Phosphoserine. An N-linked (GlcNAc...) asparagine glycan is attached at asparagine 166. A Phosphoserine modification is found at serine 176.

It belongs to the somatotropin/prolactin family. Monomer, dimer, trimer, tetramer and pentamer, disulfide-linked or non-covalently associated, in homomeric and heteromeric combinations. Can also form a complex either with GHBP or with the alpha2-macroglobulin complex. Expressed in the placenta.

Its subcellular location is the secreted. Plays an important role in growth control. Its major role in stimulating body growth is to stimulate the liver and other tissues to secrete IGF1. It stimulates both the differentiation and proliferation of myoblasts. It also stimulates amino acid uptake and protein synthesis in muscle and other tissues. The polypeptide is Growth hormone variant (GH2) (Homo sapiens (Human)).